Consider the following 459-residue polypeptide: tRNA modification GTPase MnmE (459 aa).

Residues Arg20, Glu85, and Arg124 each contribute to the (6S)-5-formyl-5,6,7,8-tetrahydrofolate site. The region spanning Gly221–Tyr380 is the TrmE-type G domain. K(+) is bound at residue Asn231. Residues Asn231 to Ser236, Thr250 to Thr256, and Asp275 to Gly278 each bind GTP. Ser235 is a binding site for Mg(2+). The K(+) site is built by Thr250, Ile252, and Thr255. Thr256 is a binding site for Mg(2+). (6S)-5-formyl-5,6,7,8-tetrahydrofolate is bound at residue Lys459.

This sequence belongs to the TRAFAC class TrmE-Era-EngA-EngB-Septin-like GTPase superfamily. TrmE GTPase family. Homodimer. Heterotetramer of two MnmE and two MnmG subunits. It depends on K(+) as a cofactor.

Its subcellular location is the cytoplasm. Exhibits a very high intrinsic GTPase hydrolysis rate. Involved in the addition of a carboxymethylaminomethyl (cmnm) group at the wobble position (U34) of certain tRNAs, forming tRNA-cmnm(5)s(2)U34. The protein is tRNA modification GTPase MnmE of Bacillus velezensis (strain DSM 23117 / BGSC 10A6 / LMG 26770 / FZB42) (Bacillus amyloliquefaciens subsp. plantarum).